Reading from the N-terminus, the 176-residue chain is Ribosome maturation factor RimM (176 aa).

Residues 101–173 (EGEYYHYRLI…RMVVDLPEGL (73 aa)) form the PRC barrel domain.

This sequence belongs to the RimM family. In terms of assembly, binds ribosomal protein uS19.

It is found in the cytoplasm. Its function is as follows. An accessory protein needed during the final step in the assembly of 30S ribosomal subunit, possibly for assembly of the head region. Essential for efficient processing of 16S rRNA. May be needed both before and after RbfA during the maturation of 16S rRNA. It has affinity for free ribosomal 30S subunits but not for 70S ribosomes. In Syntrophobacter fumaroxidans (strain DSM 10017 / MPOB), this protein is Ribosome maturation factor RimM.